Here is a 41-residue protein sequence, read N- to C-terminus: Large ribosomal subunit protein bL36 (41 aa).

It belongs to the bacterial ribosomal protein bL36 family.

The chain is Large ribosomal subunit protein bL36 from Jannaschia sp. (strain CCS1).